Consider the following 183-residue polypeptide: Inosine triphosphate pyrophosphatase (183 aa).

8–13 (TGNKNK) provides a ligand contact to ITP. A Mg(2+)-binding site is contributed by Glu36. Residues Lys48, 64–65 (DT), Lys81, 140–143 (FGWD), Lys161, and 166–167 (HR) each bind ITP.

Belongs to the HAM1 NTPase family. As to quaternary structure, homodimer. Mg(2+) is required as a cofactor. Mn(2+) serves as cofactor.

It localises to the cytoplasm. The protein resides in the nucleus. The catalysed reaction is ITP + H2O = IMP + diphosphate + H(+). The enzyme catalyses dITP + H2O = dIMP + diphosphate + H(+). It carries out the reaction XTP + H2O = XMP + diphosphate + H(+). Its function is as follows. Pyrophosphatase that hydrolyzes non-canonical purine nucleotides such as inosine triphosphate (ITP), deoxyinosine triphosphate (dITP) or xanthosine 5'-triphosphate (XTP) to their respective monophosphate derivatives. The enzyme does not distinguish between the deoxy- and ribose forms. Probably excludes non-canonical purines from RNA and DNA precursor pools, thus preventing their incorporation into RNA and DNA and avoiding chromosomal lesions. The sequence is that of Inosine triphosphate pyrophosphatase from Ajellomyces capsulatus (strain G186AR / H82 / ATCC MYA-2454 / RMSCC 2432) (Darling's disease fungus).